An 886-amino-acid polypeptide reads, in one-letter code: Probable mixed-linked glucan synthase 8 (886 aa).

A run of 2 helical transmembrane segments spans residues 87 to 107 (ILLHPYRLLTLVRLVAIVLFF) and 118 to 138 (GMFFWWISVIGDFWFGVSWLL). D213 is a catalytic residue. Residues D413 and D415 each contribute to the substrate site. The active site involves D577. Helical transmembrane passes span 659-679 (VFLLFYLLFPVIWIFRGIFYI), 683-703 (FPTYVLYLVIVIFMSEMIGMV), 723-743 (IIGATAVYPLAVLHIVLKCFG), 775-795 (LLFPTIVVIAVNICAIGAAIG), 812-832 (LGLVFNVWILLLIYPFALGIM), and 840-860 (YILFVLIVISFVIIALADIAI).

This sequence belongs to the glycosyltransferase 2 family. Plant cellulose synthase-like F subfamily.

The protein resides in the golgi apparatus membrane. In terms of biological role, may catalyze both beta-1,3 and beta-1,4 glycosidic linkage on beta-D-glucan. Essential for (1,3;1,4)-beta-D-glucans synthesis in grasses and cereals (Poaceae). The mixed-linked glucans (which are not present in walls of dicotyledons or most other monocotyledonous plants) are particularly important constituents of the walls of the starchy endosperm and aleurone cells of cereal grains such as oats, wheat, rice and barley. They can account for up to 70% by weight of the wall. This chain is Probable mixed-linked glucan synthase 8 (CSFL8), found in Oryza sativa subsp. japonica (Rice).